Here is a 485-residue protein sequence, read N- to C-terminus: Ribulose bisphosphate carboxylase large chain (485 aa).

Asn-124 and Thr-174 together coordinate substrate. Lys-176 (proton acceptor) is an active-site residue. Lys-178 is a binding site for substrate. Mg(2+)-binding residues include Lys-202, Asp-204, and Glu-205. Lys-202 is subject to N6-carboxylysine. Residue His-294 is the Proton acceptor of the active site. The substrate site is built by Arg-295, His-327, and Ser-379.

The protein belongs to the RuBisCO large chain family. Type I subfamily. Heterohexadecamer of 8 large chains and 8 small chains. The cofactor is Mg(2+).

The enzyme catalyses 2 (2R)-3-phosphoglycerate + 2 H(+) = D-ribulose 1,5-bisphosphate + CO2 + H2O. It carries out the reaction D-ribulose 1,5-bisphosphate + O2 = 2-phosphoglycolate + (2R)-3-phosphoglycerate + 2 H(+). RuBisCO catalyzes two reactions: the carboxylation of D-ribulose 1,5-bisphosphate, the primary event in carbon dioxide fixation, as well as the oxidative fragmentation of the pentose substrate. Both reactions occur simultaneously and in competition at the same active site. In Rhodopseudomonas palustris (strain ATCC BAA-98 / CGA009), this protein is Ribulose bisphosphate carboxylase large chain.